Reading from the N-terminus, the 360-residue chain is Uptake hydrogenase small subunit (360 aa).

The tat-type signal signal peptide spans 1–46; it reads MATAETFYDVIRRQGITRRSFTKFCSLTAASLGFGPGAATAMAEAL. 8 residues coordinate [4Fe-4S] cluster: Cys-62, Cys-65, Cys-160, Cys-194, His-232, Cys-235, Cys-260, and Cys-266. Cys-275, Cys-294, and Cys-297 together coordinate [3Fe-4S] cluster.

The protein belongs to the [NiFe]/[NiFeSe] hydrogenase small subunit family. In terms of assembly, heterodimer of a large and a small subunit. The cofactor is [4Fe-4S] cluster. [3Fe-4S] cluster serves as cofactor. Post-translationally, predicted to be exported by the Tat system. The position of the signal peptide cleavage has not been experimentally proven.

It localises to the cell membrane. The enzyme catalyses H2 + A = AH2. Functionally, this enzyme recycles the H(2) produced by nitrogenase to increase the production of ATP and to protect nitrogenase against inhibition or damage by O(2) under carbon- or phosphate-limited conditions. The polypeptide is Uptake hydrogenase small subunit (hupA) (Rhizobium leguminosarum bv. viciae).